The primary structure comprises 81 residues: RNA-binding protein KhpA (81 aa).

The 48-residue stretch at lysine 34 to aspartate 81 folds into the KH domain.

The protein belongs to the KhpA RNA-binding protein family. Forms a complex with KhpB.

It localises to the cytoplasm. A probable RNA chaperone. Forms a complex with KhpB which binds to cellular RNA and controls its expression. Plays a role in peptidoglycan (PG) homeostasis and cell length regulation. The protein is RNA-binding protein KhpA of Bacillus subtilis (strain 168).